Reading from the N-terminus, the 618-residue chain is Rho guanine nucleotide exchange factor 25 (618 aa).

Disordered regions lie at residues 26–63 (CAVPGQEGPPERDPLGPGSTKTESDCIEEDQTGQREPE) and 169–193 (GPGDKAQPAEEETLSQAPKNEEEQK). A DH domain is found at 199–375 (RSMFVLGELV…CFVPKRCNDM (177 aa)). Residues 317-338 (LGHRLQLNDLLIKPVQRIMKYQ) are important for binding to Rho GTPases. Positions 387-505 (KLTAQGKLLG…WIKQVAQILE (119 aa)) constitute a PH domain. Residues 506–532 (SQRDFLNALQSPIEYQRRESQTNSLGR) form a sufficient to bind activated GNAQ region. Disordered stretches follow at residues 521-556 (QRRESQTNSLGRPGGPWVGSPGRMRPGDLAQASMHT) and 584-604 (ALSDTPQTPHDSPALPTVNTP). A compositionally biased stretch (polar residues) spans 584 to 593 (ALSDTPQTPH).

Interacts with activated GNAQ and GNA11. Interacts (via the DH domain) with POPDC1 (via the C-terminus cytoplasmic tail). Interacts with RHOA, CDC42 and RAC1. Highly expressed in excitable tissues, such as brain, heart and muscle. Elevated expression in hippocampus and cerebellum.

The protein localises to the cytoplasm. The protein resides in the myofibril. It is found in the sarcomere. It localises to the cell membrane. Its function is as follows. May play a role in actin cytoskeleton reorganization in different tissues since its activation induces formation of actin stress fibers. It works as a guanine nucleotide exchange factor for Rho family of small GTPases. Links specifically G alpha q/11-coupled receptors to RHOA activation. May be an important regulator of processes involved in axon and dendrite formation. In neurons seems to be an exchange factor primarily for RAC1. Involved in skeletal myogenesis. The sequence is that of Rho guanine nucleotide exchange factor 25 (Arhgef25) from Mus musculus (Mouse).